Reading from the N-terminus, the 185-residue chain is Elongation factor P (185 aa).

It belongs to the elongation factor P family.

Its subcellular location is the cytoplasm. The protein operates within protein biosynthesis; polypeptide chain elongation. Involved in peptide bond synthesis. Stimulates efficient translation and peptide-bond synthesis on native or reconstituted 70S ribosomes in vitro. Probably functions indirectly by altering the affinity of the ribosome for aminoacyl-tRNA, thus increasing their reactivity as acceptors for peptidyl transferase. The protein is Elongation factor P of Bordetella bronchiseptica (strain ATCC BAA-588 / NCTC 13252 / RB50) (Alcaligenes bronchisepticus).